The sequence spans 520 residues: Pentatricopeptide repeat-containing protein At1g28690, mitochondrial (520 aa).

The N-terminal 19 residues, 1–19, are a transit peptide targeting the mitochondrion; the sequence is MRIFRFTSISPRILPSNHY. 11 PPR repeats span residues 68-98, 99-133, 134-168, 174-208, 209-235, 236-271, 272-306, 307-337, 338-372, 373-403, and 409-439; these read DLNI…LPKP, TLSA…GEKA, DGYT…RIIK, DDVL…NVVC, CTSM…TKVK, DIVV…GFHP, NIST…GVYT, HIKM…MQEK, NVFS…RIEP, NYVT…MQRD, and KMEH…MPER. Positions 444–520 are type E motif; that stretch reads IWAALLSSCN…TIGRSWTSED (77 aa).

It belongs to the PPR family. PCMP-E subfamily.

It localises to the mitochondrion. This Arabidopsis thaliana (Mouse-ear cress) protein is Pentatricopeptide repeat-containing protein At1g28690, mitochondrial (PCMP-E34).